The chain runs to 176 residues: ATP-dependent protease subunit HslV (176 aa).

Residue threonine 5 is part of the active site. Na(+) is bound by residues glycine 161, cysteine 164, and threonine 167.

The protein belongs to the peptidase T1B family. HslV subfamily. As to quaternary structure, a double ring-shaped homohexamer of HslV is capped on each side by a ring-shaped HslU homohexamer. The assembly of the HslU/HslV complex is dependent on binding of ATP.

The protein localises to the cytoplasm. The catalysed reaction is ATP-dependent cleavage of peptide bonds with broad specificity.. Its activity is regulated as follows. Allosterically activated by HslU binding. Functionally, protease subunit of a proteasome-like degradation complex believed to be a general protein degrading machinery. This chain is ATP-dependent protease subunit HslV, found in Sulfurovum sp. (strain NBC37-1).